Here is a 277-residue protein sequence, read N- to C-terminus: Large ribosomal subunit protein uL2 (277 aa).

2 disordered regions span residues 35-60 (EKQS…GHKQ) and 225-277 (MNPV…ANKR). Residues 43–53 (RNNNGHITTRH) show a composition bias toward polar residues.

Belongs to the universal ribosomal protein uL2 family. In terms of assembly, part of the 50S ribosomal subunit. Forms a bridge to the 30S subunit in the 70S ribosome.

In terms of biological role, one of the primary rRNA binding proteins. Required for association of the 30S and 50S subunits to form the 70S ribosome, for tRNA binding and peptide bond formation. It has been suggested to have peptidyltransferase activity; this is somewhat controversial. Makes several contacts with the 16S rRNA in the 70S ribosome. The protein is Large ribosomal subunit protein uL2 of Methylobacillus flagellatus (strain ATCC 51484 / DSM 6875 / VKM B-1610 / KT).